Here is a 554-residue protein sequence, read N- to C-terminus: Formate--tetrahydrofolate ligase (554 aa).

65–72 (TPAGEGKT) lines the ATP pocket.

Belongs to the formate--tetrahydrofolate ligase family.

It carries out the reaction (6S)-5,6,7,8-tetrahydrofolate + formate + ATP = (6R)-10-formyltetrahydrofolate + ADP + phosphate. The protein operates within one-carbon metabolism; tetrahydrofolate interconversion. The polypeptide is Formate--tetrahydrofolate ligase (Petrotoga mobilis (strain DSM 10674 / SJ95)).